Here is a 129-residue protein sequence, read N- to C-terminus: Cytochrome c oxidase subunit 5B, mitochondrial (129 aa).

The N-terminal 31 residues, 1-31 (MASRLLRGAGALAAQALRARGPSGAAAVRSM), are a transit peptide targeting the mitochondrion. N6-acetyllysine occurs at positions 68 and 86. Residues Cys-91, Cys-93, Cys-113, and Cys-116 each coordinate Zn(2+). Lys-121 is subject to N6-acetyllysine.

Belongs to the cytochrome c oxidase subunit 5B family. Component of the cytochrome c oxidase (complex IV, CIV), a multisubunit enzyme composed of 14 subunits. The complex is composed of a catalytic core of 3 subunits MT-CO1, MT-CO2 and MT-CO3, encoded in the mitochondrial DNA, and 11 supernumerary subunits COX4I, COX5A, COX5B, COX6A, COX6B, COX6C, COX7A, COX7B, COX7C, COX8 and NDUFA4, which are encoded in the nuclear genome. The complex exists as a monomer or a dimer and forms supercomplexes (SCs) in the inner mitochondrial membrane with NADH-ubiquinone oxidoreductase (complex I, CI) and ubiquinol-cytochrome c oxidoreductase (cytochrome b-c1 complex, complex III, CIII), resulting in different assemblies (supercomplex SCI(1)III(2)IV(1) and megacomplex MCI(2)III(2)IV(2)).

It localises to the mitochondrion inner membrane. The protein operates within energy metabolism; oxidative phosphorylation. Functionally, component of the cytochrome c oxidase, the last enzyme in the mitochondrial electron transport chain which drives oxidative phosphorylation. The respiratory chain contains 3 multisubunit complexes succinate dehydrogenase (complex II, CII), ubiquinol-cytochrome c oxidoreductase (cytochrome b-c1 complex, complex III, CIII) and cytochrome c oxidase (complex IV, CIV), that cooperate to transfer electrons derived from NADH and succinate to molecular oxygen, creating an electrochemical gradient over the inner membrane that drives transmembrane transport and the ATP synthase. Cytochrome c oxidase is the component of the respiratory chain that catalyzes the reduction of oxygen to water. Electrons originating from reduced cytochrome c in the intermembrane space (IMS) are transferred via the dinuclear copper A center (CU(A)) of subunit 2 and heme A of subunit 1 to the active site in subunit 1, a binuclear center (BNC) formed by heme A3 and copper B (CU(B)). The BNC reduces molecular oxygen to 2 water molecules using 4 electrons from cytochrome c in the IMS and 4 protons from the mitochondrial matrix. The sequence is that of Cytochrome c oxidase subunit 5B, mitochondrial (COX5B) from Pongo abelii (Sumatran orangutan).